The following is a 582-amino-acid chain: Probable DNA ligase (582 aa).

Glu-243 contributes to the ATP binding site. Lys-245 serves as the catalytic N6-AMP-lysine intermediate. 6 residues coordinate ATP: Arg-250, Arg-265, Glu-295, Phe-335, Arg-410, and Lys-416.

This sequence belongs to the ATP-dependent DNA ligase family. Mg(2+) serves as cofactor.

It catalyses the reaction ATP + (deoxyribonucleotide)n-3'-hydroxyl + 5'-phospho-(deoxyribonucleotide)m = (deoxyribonucleotide)n+m + AMP + diphosphate.. DNA ligase that seals nicks in double-stranded DNA during DNA replication, DNA recombination and DNA repair. The protein is Probable DNA ligase of Dictyoglomus thermophilum (strain ATCC 35947 / DSM 3960 / H-6-12).